The following is a 167-amino-acid chain: Protein FimG (167 aa).

A signal peptide spans 1-23; the sequence is MKWCKRGYVLAAILALASATIQA. Residues cysteine 39 and cysteine 77 are joined by a disulfide bond.

Belongs to the fimbrial protein family.

Its subcellular location is the fimbrium. Functionally, involved in regulation of length and mediation of adhesion of type 1 fimbriae (but not necessary for the production of fimbriae). Involved in the integration of FimH in the fimbriae. In Escherichia coli (strain K12), this protein is Protein FimG (fimG).